The chain runs to 52 residues: UPF0181 protein VPA0916 (52 aa).

It belongs to the UPF0181 family.

In Vibrio parahaemolyticus serotype O3:K6 (strain RIMD 2210633), this protein is UPF0181 protein VPA0916.